Consider the following 375-residue polypeptide: tRNA-specific 2-thiouridylase MnmA (375 aa).

Residues 8-15 (GLSGGVDS) and methionine 34 each bind ATP. The segment at 104-106 (NPD) is interaction with target base in tRNA. Catalysis depends on cysteine 109, which acts as the Nucleophile. Residues cysteine 109 and cysteine 205 are joined by a disulfide bond. ATP is bound at residue glycine 133. An interaction with tRNA region spans residues 155-157 (KDQ). Catalysis depends on cysteine 205, which acts as the Cysteine persulfide intermediate. Positions 313–314 (RY) are interaction with tRNA.

Belongs to the MnmA/TRMU family.

The protein resides in the cytoplasm. It carries out the reaction S-sulfanyl-L-cysteinyl-[protein] + uridine(34) in tRNA + AH2 + ATP = 2-thiouridine(34) in tRNA + L-cysteinyl-[protein] + A + AMP + diphosphate + H(+). In terms of biological role, catalyzes the 2-thiolation of uridine at the wobble position (U34) of tRNA, leading to the formation of s(2)U34. This chain is tRNA-specific 2-thiouridylase MnmA, found in Acholeplasma laidlawii (strain PG-8A).